Reading from the N-terminus, the 171-residue chain is Peptide deformylase 1 (171 aa).

Positions 99 and 141 each coordinate Fe cation. Residue glutamate 142 is part of the active site.

This sequence belongs to the polypeptide deformylase family. Fe(2+) is required as a cofactor.

It catalyses the reaction N-terminal N-formyl-L-methionyl-[peptide] + H2O = N-terminal L-methionyl-[peptide] + formate. Removes the formyl group from the N-terminal Met of newly synthesized proteins. Requires at least a dipeptide for an efficient rate of reaction. N-terminal L-methionine is a prerequisite for activity but the enzyme has broad specificity at other positions. This chain is Peptide deformylase 1, found in Xanthomonas axonopodis pv. citri (strain 306).